The chain runs to 235 residues: Demethylmenaquinone methyltransferase (235 aa).

Residues T58, D79, and 106–107 each bind S-adenosyl-L-methionine; that span reads NA.

Belongs to the class I-like SAM-binding methyltransferase superfamily. MenG/UbiE family.

It catalyses the reaction a 2-demethylmenaquinol + S-adenosyl-L-methionine = a menaquinol + S-adenosyl-L-homocysteine + H(+). It functions in the pathway quinol/quinone metabolism; menaquinone biosynthesis; menaquinol from 1,4-dihydroxy-2-naphthoate: step 2/2. Methyltransferase required for the conversion of demethylmenaquinol (DMKH2) to menaquinol (MKH2). The sequence is that of Demethylmenaquinone methyltransferase from Shouchella clausii (strain KSM-K16) (Alkalihalobacillus clausii).